We begin with the raw amino-acid sequence, 278 residues long: Pantothenate synthetase (278 aa).

30-37 provides a ligand contact to ATP; sequence MGGLHQGH. The active-site Proton donor is His-37. A (R)-pantoate-binding site is contributed by Gln-61. Position 61 (Gln-61) interacts with beta-alanine. Residue 146 to 149 coordinates ATP; the sequence is GQKD. (R)-pantoate is bound at residue Gln-152. Residues Ile-175 and 183–186 contribute to the ATP site; that span reads MSTR.

The protein belongs to the pantothenate synthetase family. In terms of assembly, homodimer.

It is found in the cytoplasm. It carries out the reaction (R)-pantoate + beta-alanine + ATP = (R)-pantothenate + AMP + diphosphate + H(+). Its pathway is cofactor biosynthesis; (R)-pantothenate biosynthesis; (R)-pantothenate from (R)-pantoate and beta-alanine: step 1/1. Functionally, catalyzes the condensation of pantoate with beta-alanine in an ATP-dependent reaction via a pantoyl-adenylate intermediate. The sequence is that of Pantothenate synthetase from Ruthia magnifica subsp. Calyptogena magnifica.